A 357-amino-acid polypeptide reads, in one-letter code: Solute carrier family 25 member 3 (357 aa).

Residues 1–45 (MFSSVAHLARANPFNAPHLQLVHDGLSGPRSPPAPPRRSRHLAAA) constitute a mitochondrion transit peptide. Over 46–58 (AVEEYSCEFGSMK) the chain is Mitochondrial intermembrane. 3 Solcar repeats span residues 58 to 142 (KYYA…FKAL), 155 to 239 (WRTS…TVEA), and 256 to 334 (EQLV…VKVY). Residues 59-81 (YYALCGFGGVLSCGLTHTAVVPL) traverse the membrane as a helical segment. Residues 82-116 (DLVKCRMQVDPQKYKGIFNGFSITLKEDGVRGLAK) are Mitochondrial matrix-facing. K94 is modified (N6-acetyllysine). K107 is modified (N6-methyllysine). Residues 117–136 (GWAPTLIGYSMQGLCKFGFY) traverse the membrane as a helical segment. Residues 137 to 156 (EVFKALYSNILGEENTYLWR) lie on the Mitochondrial intermembrane side of the membrane. The chain crosses the membrane as a helical span at residues 157–178 (TSLYLASSASAEFFADIALAPM). Over 179–213 (EAAKVRIQTQPGYANTLREAVPKMYKEEGLNAFYK) the chain is Mitochondrial matrix. Phosphotyrosine is present on Y191. K204 is subject to N6-acetyllysine. A helical transmembrane segment spans residues 214-233 (GVAPLWMRQIPYTMMKFACF). Topologically, residues 234–256 (ERTVEALYKFVVPKPRSECTKAE) are mitochondrial intermembrane. Residues 257–279 (QLVVTFVAGYIAGVFCAIVSHPA) form a helical membrane-spanning segment. Residues 280–309 (DSVVSVLNKEKGSTASQVLQRLGFRGVWKG) are Mitochondrial matrix-facing. Residues 310–328 (LFARIIMIGTLTALQWFIY) form a helical membrane-spanning segment. At 329–357 (DSVKVYFRLPRPPPPEMPESLKKKLGLTE) the chain is on the mitochondrial intermembrane side.

Belongs to the mitochondrial carrier (TC 2.A.29) family. As to quaternary structure, interacts with PPIF; the interaction is impaired by CsA.

It localises to the mitochondrion inner membrane. The enzyme catalyses phosphate(in) + H(+)(in) = phosphate(out) + H(+)(out). Functionally, inorganic ion transporter that transports phosphate or copper ions across the mitochondrial inner membrane into the matrix compartment. Mediates proton-coupled symport of phosphate ions necessary for mitochondrial oxidative phosphorylation of ADP to ATP. Transports copper ions probably in the form of anionic copper(I) complexes to maintain mitochondrial matrix copper pool and to supply copper for cytochrome C oxidase complex assembly. May also play a role in regulation of the mitochondrial permeability transition pore (mPTP). This is Solute carrier family 25 member 3 from Mus musculus (Mouse).